Consider the following 36-residue polypeptide: Photosystem II reaction center protein Y (36 aa).

Topologically, residues methionine 1 to arginine 4 are lumenal. A helical membrane pass occupies residues leucine 5–isoleucine 23. Over glycine 24–arginine 36 the chain is Stromal.

Belongs to the PsbY family. PSII is composed of 1 copy each of membrane proteins PsbA, PsbB, PsbC, PsbD, PsbE, PsbF, PsbH, PsbI, PsbJ, PsbK, PsbL, PsbM, PsbT, PsbX, PsbY, PsbZ, Psb30/Ycf12, at least 3 peripheral proteins of the oxygen-evolving complex and a large number of cofactors. It forms dimeric complexes.

The protein localises to the plastid. It localises to the chloroplast thylakoid membrane. Functionally, loosely associated component of the core of photosystem II (PSII), it is not always seen in crystals. PSII is a light-driven water plastoquinone oxidoreductase, using light energy to abstract electrons from H(2)O, generating a proton gradient subsequently used for ATP formation. This Thalassiosira pseudonana (Marine diatom) protein is Photosystem II reaction center protein Y.